Consider the following 360-residue polypeptide: Phospho-N-acetylmuramoyl-pentapeptide-transferase (360 aa).

Helical transmembrane passes span 21-41 (YLSF…LWMG), 73-93 (TMGG…WADL), 94-114 (SNPY…VGFV), 132-152 (WKYF…YAHG), 168-188 (VMPQ…VGTS), 199-219 (GLAI…AWAT), 239-259 (LVVV…FNTY), 263-283 (VFMG…IAVL), 288-308 (LVLV…ILQV), and 338-358 (VIVR…ATLK).

It belongs to the glycosyltransferase 4 family. MraY subfamily. It depends on Mg(2+) as a cofactor.

It localises to the cell inner membrane. It carries out the reaction UDP-N-acetyl-alpha-D-muramoyl-L-alanyl-gamma-D-glutamyl-meso-2,6-diaminopimeloyl-D-alanyl-D-alanine + di-trans,octa-cis-undecaprenyl phosphate = di-trans,octa-cis-undecaprenyl diphospho-N-acetyl-alpha-D-muramoyl-L-alanyl-D-glutamyl-meso-2,6-diaminopimeloyl-D-alanyl-D-alanine + UMP. Its pathway is cell wall biogenesis; peptidoglycan biosynthesis. Functionally, catalyzes the initial step of the lipid cycle reactions in the biosynthesis of the cell wall peptidoglycan: transfers peptidoglycan precursor phospho-MurNAc-pentapeptide from UDP-MurNAc-pentapeptide onto the lipid carrier undecaprenyl phosphate, yielding undecaprenyl-pyrophosphoryl-MurNAc-pentapeptide, known as lipid I. In Vibrio atlanticus (strain LGP32) (Vibrio splendidus (strain Mel32)), this protein is Phospho-N-acetylmuramoyl-pentapeptide-transferase.